We begin with the raw amino-acid sequence, 1132 residues long: DNA topoisomerase 2 (1132 aa).

ATP-binding positions include N68, N100, 137–139 (SSN), and 150–157 (GKNGLGVK). An interaction with DNA region spans residues 327 to 329 (NKP). Residue 363-365 (QNK) coordinates ATP. A Toprim domain is found at 442 to 577 (CTLIVCEGLS…NLKDFPFISS (136 aa)). Mg(2+)-binding residues include E448, D538, and D540. One can recognise a Topo IIA-type catalytic domain in the interval 713 to 1125 (LPHLIDGLKE…NEGQMWLKDI (413 aa)). The O-(5'-phospho-DNA)-tyrosine intermediate role is filled by Y803. Residues 979-988 (KLRSYIHTSN) form an interaction with DNA region.

Belongs to the type II topoisomerase family. The cofactor is Mg(2+). Mn(2+) serves as cofactor. Ca(2+) is required as a cofactor.

It catalyses the reaction ATP-dependent breakage, passage and rejoining of double-stranded DNA.. Its function is as follows. Can introduce negative superhelical turns into double-stranded circular DNA. This chain is DNA topoisomerase 2 (TOP2), found in Acheta domesticus (House cricket).